A 254-amino-acid polypeptide reads, in one-letter code: Alcohol dehydrogenase (254 aa).

10 to 33 is a binding site for NAD(+); sequence FVAGLGGIGLDTSREIVKSGPKNL. Residue S138 coordinates substrate. Y151 serves as the catalytic Proton acceptor.

This sequence belongs to the short-chain dehydrogenases/reductases (SDR) family. As to quaternary structure, homodimer.

The enzyme catalyses a primary alcohol + NAD(+) = an aldehyde + NADH + H(+). It catalyses the reaction a secondary alcohol + NAD(+) = a ketone + NADH + H(+). The chain is Alcohol dehydrogenase (Adh) from Drosophila adiastola (Fruit fly).